The chain runs to 929 residues: Type I restriction enzyme SauCOLORF180P endonuclease subunit (929 aa).

The 165-residue stretch at 254–418 folds into the Helicase ATP-binding domain; the sequence is QQATETGNNG…DGRTTADIFG (165 aa). 268–274 contributes to the ATP binding site; that stretch reads TTGSGKT.

The protein belongs to the HsdR family. The type I restriction/modification system is composed of three polypeptides R, M and S.

It carries out the reaction Endonucleolytic cleavage of DNA to give random double-stranded fragments with terminal 5'-phosphates, ATP is simultaneously hydrolyzed.. Functionally, the restriction (R) subunit of a type I restriction enzyme that recognizes an undetermined sequence and cleaves a random distance away. Subunit R is required for both nuclease and ATPase activities, but not for modification. After locating a non-methylated recognition site, the enzyme complex serves as a molecular motor that translocates DNA in an ATP-dependent manner until a collision occurs that triggers cleavage. This chain is Type I restriction enzyme SauCOLORF180P endonuclease subunit, found in Staphylococcus aureus (strain COL).